Consider the following 613-residue polypeptide: Probable Xaa-Pro aminopeptidase P (613 aa).

4 residues coordinate Mn(2+): aspartate 408, aspartate 419, glutamate 517, and glutamate 531.

Belongs to the peptidase M24B family. Requires Mn(2+) as cofactor.

The catalysed reaction is Release of any N-terminal amino acid, including proline, that is linked to proline, even from a dipeptide or tripeptide.. In terms of biological role, catalyzes the removal of a penultimate prolyl residue from the N-termini of peptides. This Penicillium rubens (strain ATCC 28089 / DSM 1075 / NRRL 1951 / Wisconsin 54-1255) (Penicillium chrysogenum) protein is Probable Xaa-Pro aminopeptidase P (ampp).